A 107-amino-acid polypeptide reads, in one-letter code: uncharacterized protein (107 aa).

The protein localises to the mitochondrion. This is an uncharacterized protein from Arabidopsis thaliana (Mouse-ear cress).